The sequence spans 940 residues: Serine/threonine-protein phosphatase 1 regulatory subunit 10 (940 aa).

An interaction with TOX4 region spans residues 1–348 (MGSGPIDPKE…EPAPPSEAME (348 aa)). One can recognise a TFIIS N-terminal domain in the interval 73-147 (KLLNNWLTYS…SDWMAVIRSQ (75 aa)). 4 disordered regions span residues 147 to 210 (QSST…KFRS), 248 to 270 (NVAA…NTTP), 304 to 400 (KIKK…KSVT), and 534 to 557 (VETL…LPPV). Basic and acidic residues-rich tracts occupy residues 153–166 (AEKD…EGKS) and 174–196 (PLTE…EKPK). Lys179 participates in a covalent cross-link: Glycyl lysine isopeptide (Lys-Gly) (interchain with G-Cter in SUMO2). A Phosphothreonine modification is found at Thr256. A Glycyl lysine isopeptide (Lys-Gly) (interchain with G-Cter in SUMO2) cross-link involves residue Lys262. Phosphoserine is present on Ser313. Residues 325 to 336 (KTSTEPSTAKPS) are compositionally biased toward low complexity. The segment at 357-433 (PPVEVPELMD…NKIKDFGEAA (77 aa)) is necessary for interaction with PPP1CA. The residue at position 382 (Ser382) is a Phosphoserine. Positions 393 to 408 (GRKRKSVTWPEEGKLR) are necessary for interaction with PPP1CC. A PP1-binding motif motif is present at residues 394 to 423 (RKRKSVTWPEEGKLREYFYFELDETERVNV). Ser398 bears the Phosphoserine; by PKA mark. An interaction with WDR82 region spans residues 418 to 619 (TERVNVNKIK…IKQMLVPHGL (202 aa)). Positions 540–551 (GGSGGSPDGAGG) are enriched in gly residues. A phosphoserine mark is found at Ser545 and Ser591. Residues 617-905 (HGLLGPGPIA…HDGGHSHGGD (289 aa)) form a disordered region. Residues 644 to 655 (PPGPGGPMPGPH) are compositionally biased toward pro residues. At Arg665 the chain carries Omega-N-methylarginine. Over residues 676 to 690 (GDPFWDGPGDPMRGG) the composition is skewed to low complexity. Omega-N-methylarginine occurs at positions 693 and 738. Gly residues-rich tracts occupy residues 725–763 (ARGG…GMGN) and 789–844 (GSMG…GSGG). Composition is skewed to basic and acidic residues over residues 861-886 (PHDV…HDGP) and 894-903 (RGHDGGHSHG). The segment at 906 to 934 (MSNRPVCRHFMMKGNCRYENNCAFYHPGV) adopts a C3H1-type zinc-finger fold.

In terms of assembly, component of the PNUTS-PP1 complex (also named PTW/PP1 complex), composed of PPP1R10/PNUTS, TOX4, WDR82, and PPP1CA (or PPP1CB or PPP1CC). Phosphorylated on Ser-398 by PKA within the region necessary for interaction with PPP1CA.

The protein resides in the nucleus. Its subcellular location is the chromosome. Functionally, substrate-recognition component of the PNUTS-PP1 protein phosphatase complex, a protein phosphatase 1 (PP1) complex that promotes RNA polymerase II transcription pause-release, allowing transcription elongation. Promoter-proximal pausing by RNA polymerase II is a transcription halt following transcription initiation but prior to elongation, which acts as a checkpoint to control that transcripts are favorably configured for transcriptional elongation. The PNUTS-PP1 complex mediates the release of RNA polymerase II from promoter-proximal region of genes by catalyzing dephosphorylation of proteins involved in transcription, such as AFF4, CDK9, MEPCE, INTS12, NCBP1, POLR2M/GDOWN1 and SUPT6H. The PNUTS-PP1 complex also regulates RNA polymerase II transcription termination by mediating dephosphorylation of SUPT5H in termination zones downstream of poly(A) sites, thereby promoting deceleration of RNA polymerase II transcription. PNUTS-PP1 complex is also involved in the response to replication stress by mediating dephosphorylation of POLR2A at 'Ser-5' of the CTD, promoting RNA polymerase II degradation. The PNUTS-PP1 complex also plays a role in the control of chromatin structure and cell cycle progression during the transition from mitosis into interphase. PNUTS-PP1 complex mediates dephosphorylation of MYC, promoting MYC stability by preventing MYC ubiquitination by the SCF(FBXW7) complex. In addition to acts as a substrate-recognition component, PPP1R10/PNUTS also acts as a nuclear targeting subunit for the PNUTS-PP1 complex. In some context, PPP1R10/PNUTS also acts as an inhibitor of protein phosphatase 1 (PP1) activity by preventing access to substrates, such as RB. The sequence is that of Serine/threonine-protein phosphatase 1 regulatory subunit 10 (PPP1R10) from Pan troglodytes (Chimpanzee).